The sequence spans 296 residues: tRNA dimethylallyltransferase (296 aa).

9 to 16 (GTTASGKS) serves as a coordination point for ATP. 11–16 (TASGKS) is a binding site for substrate. An interaction with substrate tRNA region spans residues 34–37 (DSLA).

The protein belongs to the IPP transferase family. Monomer. Mg(2+) is required as a cofactor.

The catalysed reaction is adenosine(37) in tRNA + dimethylallyl diphosphate = N(6)-dimethylallyladenosine(37) in tRNA + diphosphate. In terms of biological role, catalyzes the transfer of a dimethylallyl group onto the adenine at position 37 in tRNAs that read codons beginning with uridine, leading to the formation of N6-(dimethylallyl)adenosine (i(6)A). This is tRNA dimethylallyltransferase from Campylobacter curvus (strain 525.92).